The sequence spans 86 residues: Candiduxin-1 (86 aa).

Residues 1–21 form the signal peptide; that stretch reads MKTLLLTLVVLTIACLDLGYT. Disulfide bonds link Cys24–Cys45, Cys38–Cys62, Cys66–Cys78, and Cys79–Cys84.

The protein belongs to the three-finger toxin family. Short-chain subfamily. Orphan group IX sub-subfamily. In terms of tissue distribution, expressed by the venom gland.

It localises to the secreted. In Bungarus candidus (Malayan krait), this protein is Candiduxin-1.